Reading from the N-terminus, the 213-residue chain is Large ribosomal subunit protein eL14 (213 aa).

Position 79 is an N6-acetyllysine (Lys79). An N6-acetyllysine; alternate modification is found at Lys85. Lys85 carries the N6-succinyllysine; alternate modification. Lys124 is covalently cross-linked (Glycyl lysine isopeptide (Lys-Gly) (interchain with G-Cter in SUMO2)). At Ser139 the chain carries Phosphoserine. The disordered stretch occupies residues Thr166–Ala213. One copy of the 1-1; approximate repeat lies at Lys169–Ala173. A 4 X 5 AA tandem repeats of Q-K-A-[APS]-X region spans residues Lys169–Pro188. Repeat copies occupy residues Gln174 to Ala178, Gln179 to Gly183, Gln184 to Pro188, Lys191 to Gln193, and Lys194 to Gln196. A 2 X 3 AA tandem repeats of K-G-Q region spans residues Lys191–Gln196. N6-succinyllysine is present on Lys202.

The protein belongs to the eukaryotic ribosomal protein eL14 family. As to quaternary structure, component of the large ribosomal subunit.

It localises to the cytoplasm. In terms of biological role, component of the large ribosomal subunit. The ribosome is a large ribonucleoprotein complex responsible for the synthesis of proteins in the cell. The polypeptide is Large ribosomal subunit protein eL14 (RPL14) (Sus scrofa (Pig)).